The primary structure comprises 429 residues: Enolase (429 aa).

Residue glutamine 163 coordinates (2R)-2-phosphoglycerate. Glutamate 205 acts as the Proton donor in catalysis. Residues aspartate 242, glutamate 286, and aspartate 313 each contribute to the Mg(2+) site. Lysine 338, arginine 367, serine 368, and lysine 389 together coordinate (2R)-2-phosphoglycerate. Residue lysine 338 is the Proton acceptor of the active site.

It belongs to the enolase family. Mg(2+) serves as cofactor.

The protein localises to the cytoplasm. The protein resides in the secreted. It is found in the cell surface. The catalysed reaction is (2R)-2-phosphoglycerate = phosphoenolpyruvate + H2O. It functions in the pathway carbohydrate degradation; glycolysis; pyruvate from D-glyceraldehyde 3-phosphate: step 4/5. Its function is as follows. Catalyzes the reversible conversion of 2-phosphoglycerate (2-PG) into phosphoenolpyruvate (PEP). It is essential for the degradation of carbohydrates via glycolysis. The polypeptide is Enolase (Thermoanaerobacter sp. (strain X514)).